A 367-amino-acid polypeptide reads, in one-letter code: Protein P39 (367 aa).

Coiled-coil stretches lie at residues arginine 165–glutamine 202 and glutamate 235–leucine 308.

In terms of biological role, might be involved in virion assembly and vector-mediated transmission of the virus. This is Protein P39 from Peanut clump virus (isolate 87/TGTA2) (PCV).